We begin with the raw amino-acid sequence, 983 residues long: MAATATEDGGLSFTVASVMEDVLQQHGNGLRDHDLVSRRAEEAASRRYEAANWLRRMVGVVGAKDLPAEPTEEGLRLGLRSGIILCKVLNKVQPGAVSKVVESPCDAILVADGAPLSAFQYFENVRNFLVAIQEMGFPTFEASDLEQGGNASRVVNCVLAIKSYDEWKQSGGIGVWKFGGNIKPPALGKSSFVRKNSEPFMNSLSRTSSINNEKAPSENDSNKLSSPSSLSTLVRAVLSDKKPEDVPKLIESLLSKVVEEFENRVTNQYELVRAAPRESTSSQNNRSFLKPLGEREREEKSFKAIKKDDHNSQILDEKMKTRQFKQLTIFNQQQEDIEGLRQTLYTTRAGMQFMQKKFQEEFSSLGMHVHGLAHAASGYHRVLEENRKLYNQVQDLKGSIRVYCRVRPFLPGQSSFSSTIGNMEDDTIGINTASRHGKSLKSFTFNKVFGPSATQEEVFSDMQPLIRSVLDGYNVCIFAYGQTGSGKTFTMSGPRDLTEKSQGVNYRALGDLFLLAEQRKDTFRYDIAVQMIEIYNEQVRDLLVTDGSNKRLEIRNSSQKGLSVPDASLVPVSSTFDVIDLMKTGHKNRAVGSTALNDRSSRSHSCLTVHVQGRDLTSGAVLRGCMHLVDLAGSERVDKSEVTGDRLKEAQHINRSLSALGDVIASLAHKNPHVPYRNSKLTQLLQDSLGGQAKTLMFVHISPEADAVGETISTLKFAERVATVELGAARVNNDTSDVKELKEQIATLKAALARKEAESQQNNILKTPGGSEKHKAKTGEVEIHNNNIMTKKSESCEVEEITVNSPPWPPVASPGQAYREDDRSFGSSEWVDKVMVNNRQDEMRRVESLWGGATTENGIGILPEDFYRRDLASDTSRIFSEHSYNIFMGNNNSTDDLDAATSDSSEPDLLWQFNQSTKIPTRSNIESKLKKPVSKPIRSPQSRNNSNNTVSRPLASQKVGNGPRGMKQFGPADMKRKATNARH.

In terms of domain architecture, Calponin-homology (CH) spans 44 to 166; that stretch reads ASRRYEAANW…CVLAIKSYDE (123 aa). 2 stretches are compositionally biased toward polar residues: residues 203 to 214 and 278 to 287; these read SLSRTSSINNEK and ESTSSQNNRS. Disordered regions lie at residues 203–227 and 276–295; these read SLSR…LSSP and PRES…LGER. One can recognise a Kinesin motor domain in the interval 399-724; the sequence is SIRVYCRVRP…LKFAERVATV (326 aa). 481–488 serves as a coordination point for ATP; it reads GQTGSGKT. A coiled-coil region spans residues 731 to 758; sequence VNNDTSDVKELKEQIATLKAALARKEAE. Disordered stretches follow at residues 802 to 824 and 921 to 983; these read TVNS…DDRS and TRSN…NARH. Positions 939 to 951 are enriched in polar residues; that stretch reads SPQSRNNSNNTVS.

This sequence belongs to the TRAFAC class myosin-kinesin ATPase superfamily. Kinesin family. KIN-14 subfamily.

This Arabidopsis thaliana (Mouse-ear cress) protein is Kinesin-like protein KIN-14I.